The primary structure comprises 684 residues: Threonine--tRNA ligase (684 aa).

The TGS domain occupies 1 to 66 (MTAVASSAPA…DTDVEVTPVA (66 aa)). The interval 261 to 567 (DHRKLGVELD…LTEHYAGAFP (307 aa)) is catalytic. Zn(2+)-binding residues include Cys-366, His-417, and His-544.

Belongs to the class-II aminoacyl-tRNA synthetase family. As to quaternary structure, homodimer. Requires Zn(2+) as cofactor.

Its subcellular location is the cytoplasm. The catalysed reaction is tRNA(Thr) + L-threonine + ATP = L-threonyl-tRNA(Thr) + AMP + diphosphate + H(+). Functionally, catalyzes the attachment of threonine to tRNA(Thr) in a two-step reaction: L-threonine is first activated by ATP to form Thr-AMP and then transferred to the acceptor end of tRNA(Thr). Also edits incorrectly charged L-seryl-tRNA(Thr). In Mycolicibacterium smegmatis (strain ATCC 700084 / mc(2)155) (Mycobacterium smegmatis), this protein is Threonine--tRNA ligase.